Consider the following 626-residue polypeptide: Janus kinase and microtubule-interacting protein 1 (626 aa).

The interval methionine 1 to alanine 22 is disordered. A mediates association with microtubules region spans residues methionine 1 to valine 365. Coiled-coil stretches lie at residues valine 19–arginine 255 and glutamate 284–serine 413. A mediates interaction with TYK2 and GABBR1 region spans residues valine 365–methionine 626. Serine 382 is modified (phosphoserine). Positions glutamate 452 to threonine 461 are enriched in polar residues. Residues glutamate 452 to aspartate 477 form a disordered region. Threonine 470 is modified (phosphothreonine). Residues glutamine 490–arginine 604 adopt a coiled-coil conformation.

This sequence belongs to the JAKMIP family. In terms of assembly, homodimer. Forms a complex with GABBR1 and KIF5B/kinesin-1. Interacts with JAK1 and TYK2. As to expression, predominantly expressed in neural tissues and lymphoid cells (at protein level). Isoform 2, isoform 3 and isoform 4 are specifically expressed in brain and retina. Isoform 1 and isoform 5 are also detected in liver, lung and skeletal muscle. Also detected in testis and to a lower extent spleen and intestine.

It localises to the cytoplasm. The protein localises to the cytoskeleton. The protein resides in the membrane. Associates with microtubules and may play a role in the microtubule-dependent transport of the GABA-B receptor. May play a role in JAK1 signaling and regulate microtubule cytoskeleton rearrangements. In Homo sapiens (Human), this protein is Janus kinase and microtubule-interacting protein 1 (JAKMIP1).